The primary structure comprises 607 residues: MSQVFDASAFLATCSGRPGVYRMFDGEARLLYVGKAKNLKKRLASYFRKAGLAPKTAALVARIAQVETTITANETEALLLEQNLIKEWRPPYNILLRDDKSYPYVFLSDGEFPRLGIHRGAKKAKGRYFGPYPSAGAIRESLSLLQKAFSVRQCEDSYYANRTRPCLQYQIKRCKGPCTDLVTAEEYAEDVRHSVMFLEGRSQQLGNELNAEMEKAAMALDFEKAAELRDQIALLRRVQDQQYIEGGSGDVDVIAAFVNPGGACVHLISVRGGRVLGSKNFFPQVGIEEEVAEVMAAFLSQYYLGNAERELPGELIVNVVHEDFNAITEALHTLRGRELTISHRVRGTRARWQQLAVTNAEQALNARLANRQHMAARFEALAEVLGLDEVPQRLECYDISHSSGEATVASCVVFGPEGPIKSDYRRFNIEGVTAGDDYAAMHQALTRRYGRIKDGEGKLPDVLLVDGGKGQLNMARDVMQALGFTDLTLLGVAKGVTRKAGFETLYLNDVHHEFTLKGDSSALHLIQQIRDEAHRFAITGHRARRGKARRVSSLEDVAGVGPKRRRDLLKHFGGLQELNRASIDEIAKAPGISKKLAESIYASLHSE.

Residues 16 to 94 form the GIY-YIG domain; that stretch reads GRPGVYRMFD…IKEWRPPYNI (79 aa). The UVR domain occupies 203-238; it reads QQLGNELNAEMEKAAMALDFEKAAELRDQIALLRRV.

The protein belongs to the UvrC family. Interacts with UvrB in an incision complex.

It is found in the cytoplasm. Functionally, the UvrABC repair system catalyzes the recognition and processing of DNA lesions. UvrC both incises the 5' and 3' sides of the lesion. The N-terminal half is responsible for the 3' incision and the C-terminal half is responsible for the 5' incision. This is UvrABC system protein C from Pseudomonas putida (strain ATCC 700007 / DSM 6899 / JCM 31910 / BCRC 17059 / LMG 24140 / F1).